We begin with the raw amino-acid sequence, 160 residues long: GTP-dependent dephospho-CoA kinase (160 aa).

Positions 45, 46, 47, 59, 61, 108, and 130 each coordinate GTP.

Belongs to the GTP-dependent DPCK family.

The enzyme catalyses 3'-dephospho-CoA + GTP = GDP + CoA + H(+). Its pathway is cofactor biosynthesis; coenzyme A biosynthesis. In terms of biological role, catalyzes the GTP-dependent phosphorylation of the 3'-hydroxyl group of dephosphocoenzyme A to form coenzyme A (CoA). In Staphylothermus marinus (strain ATCC 43588 / DSM 3639 / JCM 9404 / F1), this protein is GTP-dependent dephospho-CoA kinase.